The following is a 92-amino-acid chain: Small ribosomal subunit protein uS19 (92 aa).

This sequence belongs to the universal ribosomal protein uS19 family.

Functionally, protein S19 forms a complex with S13 that binds strongly to the 16S ribosomal RNA. The sequence is that of Small ribosomal subunit protein uS19 from Geobacillus kaustophilus (strain HTA426).